Consider the following 355-residue polypeptide: Guanine nucleotide-binding protein G(z) subunit alpha (355 aa).

Residues 1 to 14 (MGCRQSSEEKEAAR) show a composition bias toward basic and acidic residues. The interval 1-26 (MGCRQSSEEKEAARRSRRIDRHLRSE) is disordered. Gly-2 is lipidated: N-myristoyl glycine. Cys-3 carries the S-palmitoyl cysteine lipid modification. The G-alpha domain maps to 32–355 (REIKLLLLGT…QNNLKYIGLC (324 aa)). Residues 35-48 (KLLLLGTSNSGKST) form a G1 motif region. GTP is bound by residues 40–47 (GTSNSGKS), 176–182 (LRSRDMT), 201–205 (DVGGQ), 270–273 (NKKD), and Ala-327. Mg(2+) is bound at residue Ser-47. The tract at residues 174 to 182 (DILRSRDMT) is G2 motif. The residue at position 179 (Arg-179) is an ADP-ribosylarginine; by cholera toxin. Thr-182 lines the Mg(2+) pocket. The G3 motif stretch occupies residues 197–206 (FKMVDVGGQR). Residues 266 to 273 (ILFLNKKD) are G4 motif. The tract at residues 325 to 330 (TCATDT) is G5 motif.

Belongs to the G-alpha family. G(i/o/t/z) subfamily. As to quaternary structure, G-proteins are composed of 3 units; alpha, beta and gamma. The alpha chain contains the guanine nucleotide binding site. Interacts with ADGRB2.

The protein localises to the membrane. Its function is as follows. Guanine nucleotide-binding proteins (G proteins) are involved as modulators or transducers in various transmembrane signaling systems. The polypeptide is Guanine nucleotide-binding protein G(z) subunit alpha (GNAZ) (Homo sapiens (Human)).